Reading from the N-terminus, the 448-residue chain is Ribosome biogenesis protein YTM1 (448 aa).

A ubiquitin-like (UBL) domain region spans residues 5–86 (TSNQAVVFST…EETLEIEYIE (82 aa)). 6 WD repeats span residues 98-136 (PHESWVSAVSCSLPTHFLTTAYDGHLRAFDLSKNVTLDA), 191-230 (LHTAPVSSIAANPSGTQLLTSSWDSLIGVWDTTIPPKHEV), 271-309 (SHIGRVSKVAWLSPTQGVSCGFDSTLRTWDVERGLCTRT), 312-351 (ASEKPFLDLAVNVENQTALTVSTDRTMTLYDLRTEEALSA), 357-397 (LHPA…AAIS), and 403-439 (DGTKKVLAVDWKRGVIGIGGEGGLDVWKVGLENETQG). The disordered stretch occupies residues 225 to 261 (PPKHEVPEPTITAADQRTKKRRKVDPSSGDSSSPTAI).

It belongs to the WD repeat WDR12/YTM1 family. Component of the NOP7 complex, composed of ERB1, NOP7 and YTM1. The complex is held together by ERB1, which interacts with NOP7 via its N-terminal domain and with YTM1 via a high-affinity interaction between the seven-bladed beta-propeller domains of the 2 proteins. The NOP7 complex associates with the 66S pre-ribosome. Interacts (via UBL domain) with MDN1 (via VWFA/MIDAS domain).

The protein resides in the nucleus. It localises to the nucleolus. It is found in the nucleoplasm. Component of the NOP7 complex, which is required for maturation of the 25S and 5.8S ribosomal RNAs and formation of the 60S ribosome. The chain is Ribosome biogenesis protein YTM1 from Coprinopsis cinerea (strain Okayama-7 / 130 / ATCC MYA-4618 / FGSC 9003) (Inky cap fungus).